Reading from the N-terminus, the 425-residue chain is MLDIKRIRNNLDEIKAAMARRGEKDFDLDAVVALDEKRRELLQQVELMKNEQNTVSKEVPKLKKEGKDATEVMARMKELSGKIKELDGQVKEVEDQLEYTLLRIPNVPHPDVPQGETDDDNIEVRKWSEPTHFDFEPKAHWDIATDLGIIDFEAASKITGARFALYKGVGARLERALINFMLDLHIEEHGYTEVLPPFMVNRSSMTGTGQLPKFEEDAFKLPQKDYFLVPTAEVPVTNMHRDEIIEGANLPLSYVAYTPCFRSEAGSAGRDTRGLIRQHQFNKVELVKFVKPEDSYAELEKLTNNAEKVLQLLEIPYRIVRICTGDLGFTAAFKYDIEVWMPSYNRYVEISSCSNFEDFQARRANIRYRPEEKGKVEFLHTLNGSGLAVGRTVAAILENCQDDEGNVKIPEALIPYMRGIKVITK.

231–233 is a binding site for L-serine; sequence TAE. Residue 262–264 coordinates ATP; sequence RSE. Glu-285 lines the L-serine pocket. 349–352 serves as a coordination point for ATP; it reads EISS. Ser-385 is an L-serine binding site.

It belongs to the class-II aminoacyl-tRNA synthetase family. Type-1 seryl-tRNA synthetase subfamily. As to quaternary structure, homodimer. The tRNA molecule binds across the dimer.

It is found in the cytoplasm. It carries out the reaction tRNA(Ser) + L-serine + ATP = L-seryl-tRNA(Ser) + AMP + diphosphate + H(+). The enzyme catalyses tRNA(Sec) + L-serine + ATP = L-seryl-tRNA(Sec) + AMP + diphosphate + H(+). Its pathway is aminoacyl-tRNA biosynthesis; selenocysteinyl-tRNA(Sec) biosynthesis; L-seryl-tRNA(Sec) from L-serine and tRNA(Sec): step 1/1. In terms of biological role, catalyzes the attachment of serine to tRNA(Ser). Is also able to aminoacylate tRNA(Sec) with serine, to form the misacylated tRNA L-seryl-tRNA(Sec), which will be further converted into selenocysteinyl-tRNA(Sec). This chain is Serine--tRNA ligase, found in Alkaliphilus oremlandii (strain OhILAs) (Clostridium oremlandii (strain OhILAs)).